The primary structure comprises 380 residues: Cytochrome b (380 aa).

The next 4 helical transmembrane spans lie at 33–53, 77–98, 113–133, and 178–198; these read SGSL…FLAM, WLIR…YLHV, WNIG…GYVL, and FFAF…IHLL. Heme b contacts are provided by His-83 and His-97. Residues His-182 and His-196 each coordinate heme b. Residue His-201 coordinates a ubiquinone. Transmembrane regions (helical) follow at residues 226–246, 288–308, 320–340, and 347–367; these read YKDL…ALFS, LGGV…PILH, LSQI…WIGG, and FVLI…IALP.

It belongs to the cytochrome b family. The cytochrome bc1 complex contains 3 respiratory subunits (MT-CYB, CYC1 and UQCRFS1), 2 core proteins (UQCRC1 and UQCRC2) and probably 6 low-molecular weight proteins. Heme b is required as a cofactor.

The protein localises to the mitochondrion inner membrane. Functionally, component of the ubiquinol-cytochrome c reductase complex (complex III or cytochrome b-c1 complex) that is part of the mitochondrial respiratory chain. The b-c1 complex mediates electron transfer from ubiquinol to cytochrome c. Contributes to the generation of a proton gradient across the mitochondrial membrane that is then used for ATP synthesis. This chain is Cytochrome b (mt-cyb), found in Polyodon spathula (North American paddlefish).